A 113-amino-acid chain; its full sequence is Endoribonuclease SymE (113 aa).

Residues S29 to A74 form the SpoVT-AbrB domain.

The protein belongs to the SymE family.

The protein resides in the cytoplasm. In terms of biological role, involved in the degradation and recycling of damaged RNA. It is itself a target for degradation by the ATP-dependent protease Lon. In Escherichia coli (strain ATCC 8739 / DSM 1576 / NBRC 3972 / NCIMB 8545 / WDCM 00012 / Crooks), this protein is Endoribonuclease SymE.